A 168-amino-acid chain; its full sequence is MNEVKESLRSIEQKYKLFQQQQFTFIAALEHCRENAHDKIRPISSIEQVQSYMEHYCNNSTDRRILLMFMDICSELNKLCQHFEALHSGTPVTNSLLEKCKTLVSQSNDLSILRAKYPHDVVNHLSCDEARNHYGGVVSLIPIVLDLMKEWIAHSEKLPRKVLQHGTT.

As to quaternary structure, microtubule inner protein component of sperm flagellar doublet microtubules. Interacts with CABP1 and CALR. Interacts with INCA1. Interacts with microtubules. In terms of tissue distribution, testis-specific. Expressed in round spermatids.

It localises to the cytoplasm. The protein resides in the cytoplasmic vesicle. It is found in the secretory vesicle. Its subcellular location is the acrosome. The protein localises to the cytoskeleton. It localises to the cilium basal body. The protein resides in the flagellum axoneme. It is found in the cilium axoneme. Its subcellular location is the nucleus. Microtubule inner protein (MIP) part of the dynein-decorated doublet microtubules (DMTs) of multiciliated respiratory cells and the distal singlet microtubules of monoflagellated spermatozoa. Forms an extensive interaction network cross-linking the lumen of axonemal doublet microtubules. In Rattus norvegicus (Rat), this protein is Sperm acrosome-associated protein 9 (Spaca9).